Reading from the N-terminus, the 365-residue chain is Ribosomal RNA large subunit methyltransferase F (365 aa).

Residues 1-50 (MSKPAVKSVPSATAKTATRAVNIRQKVKAPKQAKPEAKGRAKPSKDKPRA) are disordered. Basic and acidic residues predominate over residues 33-50 (AKPEAKGRAKPSKDKPRA).

It belongs to the methyltransferase superfamily. METTL16/RlmF family.

The protein localises to the cytoplasm. It carries out the reaction adenosine(1618) in 23S rRNA + S-adenosyl-L-methionine = N(6)-methyladenosine(1618) in 23S rRNA + S-adenosyl-L-homocysteine + H(+). In terms of biological role, specifically methylates the adenine in position 1618 of 23S rRNA. This is Ribosomal RNA large subunit methyltransferase F from Shewanella baltica (strain OS155 / ATCC BAA-1091).